Here is an 806-residue protein sequence, read N- to C-terminus: Glycerol-3-phosphate acyltransferase (806 aa).

The HXXXXD motif motif lies at cysteine 305 to methionine 310.

The protein belongs to the GPAT/DAPAT family.

It localises to the cell inner membrane. It catalyses the reaction sn-glycerol 3-phosphate + an acyl-CoA = a 1-acyl-sn-glycero-3-phosphate + CoA. Its pathway is phospholipid metabolism; CDP-diacylglycerol biosynthesis; CDP-diacylglycerol from sn-glycerol 3-phosphate: step 1/3. This is Glycerol-3-phosphate acyltransferase from Salmonella paratyphi B (strain ATCC BAA-1250 / SPB7).